The following is a 443-amino-acid chain: ATP-dependent protease ATPase subunit HslU (443 aa).

Residues I20, 62–67 (GVGKTE), D255, E321, and R393 each bind ATP.

It belongs to the ClpX chaperone family. HslU subfamily. In terms of assembly, a double ring-shaped homohexamer of HslV is capped on each side by a ring-shaped HslU homohexamer. The assembly of the HslU/HslV complex is dependent on binding of ATP.

It localises to the cytoplasm. Its function is as follows. ATPase subunit of a proteasome-like degradation complex; this subunit has chaperone activity. The binding of ATP and its subsequent hydrolysis by HslU are essential for unfolding of protein substrates subsequently hydrolyzed by HslV. HslU recognizes the N-terminal part of its protein substrates and unfolds these before they are guided to HslV for hydrolysis. This is ATP-dependent protease ATPase subunit HslU from Helicobacter pylori (strain HPAG1).